The primary structure comprises 337 residues: 2-oxoglutarate receptor 1 (337 aa).

Topologically, residues 1 to 34 are extracellular; the sequence is MNEPLDYLANASDFPDYAAAFGNCTDENIPLKMH. Residues Asn-10 and Asn-23 are each glycosylated (N-linked (GlcNAc...) asparagine). A helical transmembrane segment spans residues 35 to 55; sequence YLPVIYGIIFLVGFPGNAVVI. The Cytoplasmic portion of the chain corresponds to 56-69; it reads STYIFKMRPWKSST. Residues 70-90 traverse the membrane as a helical segment; that stretch reads IIMLNLACTDLLYLTSLPFLI. The Extracellular segment spans residues 91-116; sequence HYYASGENWIFGDFMCKFIRFSFHFN. Cys-106 and Cys-183 are disulfide-bonded. A helical transmembrane segment spans residues 117–137; the sequence is LYSSILFLTCFSIFRYCVIIH. Over 138-151 the chain is Cytoplasmic; the sequence is PMSCFSIHKTRCAV. The chain crosses the membrane as a helical span at residues 152–172; the sequence is VACAVVWIISLVAVIPMTFLI. Over 173 to 201 the chain is Extracellular; it reads TSTNRTNRSACLDLTSSDELNTIKWYNLI. N-linked (GlcNAc...) asparagine glycosylation is found at Asn-176 and Asn-179. The chain crosses the membrane as a helical span at residues 202–222; sequence LTATTFCLPLVIVTLCYTTII. The Cytoplasmic segment spans residues 223–242; that stretch reads HTLTHGLQTDSCLKQKARRL. Residues 243 to 263 form a helical membrane-spanning segment; that stretch reads TILLLLAFYVCFLPFHILRVI. Residues 264–284 lie on the Extracellular side of the membrane; the sequence is RIESRLLSISCSIENQIHEAY. Residues 285 to 305 form a helical membrane-spanning segment; it reads IVSRPLAALNTFGNLLLYVVV. At 306–337 the chain is on the cytoplasmic side; the sequence is SDNFQQAVCSTVRCKVSGNLEQAKKISYSNNP.

It belongs to the G-protein coupled receptor 1 family. In terms of tissue distribution, detected in kidney and, to a lower extent, in placenta. Not detected in brain tissues including the frontal cortex, caudate putamen, thalamus, hypothalamus, hippocampus or pons.

It is found in the cell membrane. G protein-coupled receptor for dicarboxylates and amino dicarboxylates. Receptor for itaconate, a metabolite produced by myeloid lineages. In the respiratory epithelium, couples the binding of itaconate to the activation of GNA11 and downstream intracellular Ca(2+) release, leading to mucocilliary clearance of airborne pathogens. Receptor for leukotriene E4 (LTE4) produced by mast cells upon allergic inflammation. Binds with high affinity to LTE4 and elicits mucin release from pulmonary epithelium in response to airborne fungi allergens. Regulates mucin-producing goblet cell homeostasis. Receptor for alpha-ketoglutarate produced by proximal tubule renal cells upon metabolic alkalosis. In an intrarenal paracrine signaling pathway, binds alpha-ketoglutarate and drives transepithelial salt reabsorption and bicarbonate secretion by SLC26A4/pendrin-positive intercalated cells. The chain is 2-oxoglutarate receptor 1 (OXGR1) from Homo sapiens (Human).